The sequence spans 307 residues: Olfactory receptor 5M3 (307 aa).

Topologically, residues 1 to 23 (MLNFTDVTEFILLGLTSRREWQV) are extracellular. Asn3 carries N-linked (GlcNAc...) asparagine glycosylation. A helical transmembrane segment spans residues 24-44 (LFFIIFLVVYIITMVGNIGMM). Topologically, residues 45 to 52 (VLIKVSPQ) are cytoplasmic. Residues 53–73 (LNNPMYFFLSHLSFVDVWFSS) traverse the membrane as a helical segment. Residues 74–97 (NVTPKMLENLLSDKKTITYAGCLV) lie on the Extracellular side of the membrane. Cys95 and Cys187 are disulfide-bonded. The helical transmembrane segment at 98–118 (QCFFFIALVHVEIFILAAMAF) threads the bilayer. The Cytoplasmic portion of the chain corresponds to 119–137 (DRYMAIGNPLLYGSKMSRV). The helical transmembrane segment at 138 to 158 (VCIRLITFPYIYGFLTSLAAT) threads the bilayer. The Extracellular segment spans residues 159 to 194 (LWTYGLYFCGKIEINHFYCADPPLIKMACAGTFVKE). The helical transmembrane segment at 195-215 (YTMIILAGINFTYSLTVIIIS) threads the bilayer. The Cytoplasmic portion of the chain corresponds to 216-235 (YLFILIAILRMRSAEGRQKA). Residues 236 to 256 (FSTCGSHLTAVIIFYGTLIFM) traverse the membrane as a helical segment. Over 257-269 (YLRRPTEESVEQG) the chain is Extracellular. A helical membrane pass occupies residues 270-290 (KMVAVFYTTVIPMLNPMIYSL). Residues 291–307 (RNKDVKKAMMKVISRSC) lie on the Cytoplasmic side of the membrane.

Belongs to the G-protein coupled receptor 1 family.

Its subcellular location is the cell membrane. In terms of biological role, odorant receptor. This is Olfactory receptor 5M3 (OR5M3) from Homo sapiens (Human).